Consider the following 158-residue polypeptide: Kelch repeat protein B10 (158 aa).

Kelch repeat units follow at residues 25–76 (TIFV…STFG) and 77–129 (MLYF…KLNN).

This sequence belongs to the poxviruses Kelch family.

The chain is Kelch repeat protein B10 from Vaccinia virus (strain Ankara) (VACV).